A 201-amino-acid chain; its full sequence is Prostamide/prostaglandin F synthase (201 aa).

The protein belongs to the peroxiredoxin-like PRXL2 family. Prostamide/prostaglandin F synthase subfamily.

Its subcellular location is the cytoplasm. It localises to the cytosol. It carries out the reaction prostaglandin H2 + [thioredoxin]-dithiol = prostaglandin F2alpha + [thioredoxin]-disulfide. The catalysed reaction is prostamide F2alpha + [thioredoxin]-disulfide = prostamide H2 + [thioredoxin]-dithiol. Catalyzes the reduction of prostaglandin-ethanolamide H(2) (prostamide H(2)) to prostamide F(2alpha) with NADPH as proton donor. Also able to reduce prostaglandin H(2) to prostaglandin F(2alpha). This chain is Prostamide/prostaglandin F synthase (prxl2b), found in Xenopus laevis (African clawed frog).